Here is a 187-residue protein sequence, read N- to C-terminus: UPF0301 protein ECA3925 (187 aa).

This sequence belongs to the UPF0301 (AlgH) family.

This is UPF0301 protein ECA3925 from Pectobacterium atrosepticum (strain SCRI 1043 / ATCC BAA-672) (Erwinia carotovora subsp. atroseptica).